Consider the following 1469-residue polypeptide: snRNA-activating protein complex subunit 4 (1469 aa).

Positions 16–82 (ELERILDPGS…DPKDKTLPED (67 aa)) are disordered. Low complexity predominate over residues 24-36 (GSSGSHVEISESS). Residues 37–53 (LESDSEADSLPSEDLDP) show a composition bias toward acidic residues. Ser68 is modified (phosphoserine). The interval 84-133 (ETCLQLNMVYQEVIQEKLAEANLLLAQNREQQEELMRDLAGSKGTKVKDG) is SNAPC5-binding. Residues 250 to 288 (EEALLGNRLDSHDWEKISNINFEGSRSAEEIRKFWQNSE) form the Myb-like 1 domain. The region spanning 289-343 (HPSINKQEWSREEEERLQAIAAAHGHLEWQKIAEELGTSRSAFQCLQKFQQHNKA) is the HTH myb-type 1 domain. The H-T-H motif DNA-binding region spans 317–341 (WQKIAEELGTSRSAFQCLQKFQQHN). Residues 344–395 (LKRKEWTEEEDRMLTQLVQEMRVGSHIPYRRIVYYMEGRDSMQLIYRWTKSL) form the Myb-like 2 domain. 2 HTH myb-type domains span residues 396-451 (DPGL…HFSL) and 452-503 (KKGR…GKKQ). 2 consecutive DNA-binding regions (H-T-H motif) follow at residues 424–447 (WFKIREEVPGRSDAQCRDRYLRRL) and 476–499 (WAKIASELPHRSGSQCLSKWKIMM). 8 disordered regions span residues 501–558 (KKQG…GDRA), 577–661 (QSTS…QALE), 685–710 (RSCTQKEQLRQPPLPTSSPGVSSGDS), 834–894 (ASSS…KTVS), 932–981 (PLPH…DKRL), 1001–1051 (PAAS…PSPT), 1121–1167 (AAQG…PAEA), and 1184–1266 (IPEP…GPEK). Positions 503 to 516 (QGLRRRRRRARHSV) are enriched in basic residues. The span at 519-541 (SSTSSSGSSSGSSGGSSSSSSSS) shows a compositional bias: low complexity. Ser599 carries the post-translational modification Phosphoserine. The segment covering 602 to 618 (KGSSASQGGSKEASTTA) has biased composition (polar residues). Ser626 carries the post-translational modification Phosphoserine. A compositionally biased stretch (pro residues) spans 932-944 (PLPHTPHGRPAPG). Positions 951–968 (PLSGPGAPAAAKPGTSGS) are enriched in low complexity. The span at 1014–1029 (ISVSCPESGLGQSQAP) shows a compositional bias: polar residues. The segment covering 1039–1051 (EAPPFLPAAPSPT) has biased composition (pro residues). Position 1157 is a phosphothreonine (Thr1157). Residues 1184–1195 (IPEPRTSSHADP) show a composition bias toward basic and acidic residues. Ser1224 is subject to Phosphoserine. Residues 1281–1393 (ATQQWLGGQR…QGVRTTLSVP (113 aa)) are SNAPC2-binding. Ser1398, Ser1400, and Ser1440 each carry phosphoserine. The disordered stretch occupies residues 1430–1449 (APDSGKCSASSCLDTSNDPD). Residues 1436–1445 (CSASSCLDTS) show a composition bias toward polar residues.

In terms of assembly, part of the SNAPc complex composed of 5 subunits: SNAPC1, SNAPC2, SNAPC3, SNAPC4 and SNAPC5. SNAPC4 interacts with SNAPC1, SNAPC2, SNAPC5, BRF2 and TBP.

The protein localises to the nucleus. Functionally, part of the SNAPc complex required for the transcription of both RNA polymerase II and III small-nuclear RNA genes. Binds to the proximal sequence element (PSE), a non-TATA-box basal promoter element common to these 2 types of genes. Recruits TBP and BRF2 to the U6 snRNA TATA box. The protein is snRNA-activating protein complex subunit 4 of Homo sapiens (Human).